The following is a 319-amino-acid chain: Protease HtpX homolog (319 aa).

Transmembrane regions (helical) follow at residues 6–26 (TAML…VIGG) and 28–48 (GGMM…YWNS). His-130 contacts Zn(2+). The active site involves Glu-131. A Zn(2+)-binding site is contributed by His-134. 2 helical membrane-spanning segments follow: residues 145-165 (MTAT…FFGG) and 172-192 (PLGF…AALV). A Zn(2+)-binding site is contributed by Glu-201. Residues 280–319 (EMSTGSTAPVRPDNAVRKSRSVPRTGWGRGGSEPPKGPWS) form a disordered region.

This sequence belongs to the peptidase M48B family. Zn(2+) serves as cofactor.

Its subcellular location is the cell inner membrane. The sequence is that of Protease HtpX homolog from Sinorhizobium medicae (strain WSM419) (Ensifer medicae).